The chain runs to 92 residues: Acylphosphatase (92 aa).

Positions 7–92 (KTRCTISGRV…DPAPAEFSVG (86 aa)) constitute an Acylphosphatase-like domain. Residues Arg22 and Asn40 contribute to the active site.

It belongs to the acylphosphatase family.

The catalysed reaction is an acyl phosphate + H2O = a carboxylate + phosphate + H(+). This chain is Acylphosphatase (acyP), found in Halorhodospira halophila (strain DSM 244 / SL1) (Ectothiorhodospira halophila (strain DSM 244 / SL1)).